Here is a 426-residue protein sequence, read N- to C-terminus: 4-hydroxy-3-methylbut-2-en-1-yl diphosphate synthase (flavodoxin) (426 aa).

Positions 1 to 20 are disordered; that stretch reads MLDRDLTLSDDAYESSPVSR. 4 residues coordinate [4Fe-4S] cluster: Cys320, Cys323, Cys366, and Glu373.

Belongs to the IspG family. Requires [4Fe-4S] cluster as cofactor.

The enzyme catalyses (2E)-4-hydroxy-3-methylbut-2-enyl diphosphate + oxidized [flavodoxin] + H2O + 2 H(+) = 2-C-methyl-D-erythritol 2,4-cyclic diphosphate + reduced [flavodoxin]. Its pathway is isoprenoid biosynthesis; isopentenyl diphosphate biosynthesis via DXP pathway; isopentenyl diphosphate from 1-deoxy-D-xylulose 5-phosphate: step 5/6. In terms of biological role, converts 2C-methyl-D-erythritol 2,4-cyclodiphosphate (ME-2,4cPP) into 1-hydroxy-2-methyl-2-(E)-butenyl 4-diphosphate. This Wolbachia pipientis subsp. Culex pipiens (strain wPip) protein is 4-hydroxy-3-methylbut-2-en-1-yl diphosphate synthase (flavodoxin).